An 838-amino-acid chain; its full sequence is Translation initiation factor IF-2 (838 aa).

The interval 50 to 108 (VQSGKKPESPEKKDIKQNTQKEAPETQTQQKPIEQEVETKQNIDSTPIKVEPKQESLAS) is disordered. Over residues 54 to 65 (KKPESPEKKDIK) the composition is skewed to basic and acidic residues. A compositionally biased stretch (polar residues) spans 66-81 (QNTQKEAPETQTQQKP). A tr-type G domain is found at 337–506 (SRAPVVTIMG…LLQAELLELK (170 aa)). Residues 346–353 (GHVDHGKT) are G1. A GTP-binding site is contributed by 346–353 (GHVDHGKT). The G2 stretch occupies residues 371-375 (GITQH). The tract at residues 392–395 (DTPG) is G3. GTP-binding positions include 392–396 (DTPGH) and 446–449 (NKMD). The tract at residues 446 to 449 (NKMD) is G4. The G5 stretch occupies residues 482-484 (SAK).

It belongs to the TRAFAC class translation factor GTPase superfamily. Classic translation factor GTPase family. IF-2 subfamily.

The protein resides in the cytoplasm. Its function is as follows. One of the essential components for the initiation of protein synthesis. Protects formylmethionyl-tRNA from spontaneous hydrolysis and promotes its binding to the 30S ribosomal subunits. Also involved in the hydrolysis of GTP during the formation of the 70S ribosomal complex. The polypeptide is Translation initiation factor IF-2 (Campylobacter fetus subsp. fetus (strain 82-40)).